An 816-amino-acid polypeptide reads, in one-letter code: MGNYSTAIDKKWQEKWAESGLYKFDPNKEGEKLYVLEMFSYPSGSQLHAGHWFNYGPVDSWARFKRMQGYNVFQPMGFDAFGLPAENFAIKTGIHPQDSTIKNIAKMEEQLKAMGAMFNWENEVVTCSPEYYKWTQWLFLKLYEKGLAYRKKAPVNWCPSCQTVLANEQVVDGACERCSTEVTKKDLTQWFFKITDYADELLDKLDDLDWPEKTVSMQKHWIGRSTGSQVNFKVKDSDLNFDVFTTRVDTLCGVSYVVLAPENPLVDEIVSAEQKEAVENYKEEAKKQSDIERQSISREKTGVFTGAYAIHPLTGKEVPIWVGDYVLATYGTGAVMAVPAHDERDFAFAEKFNLPINRVIEAKDGSETNLPFCEHGILVNSGEFDGLTTDEAKEKIVEKLASMGLGEKKVNFRLRDWLVSRQRYWGAPIPVVYCEECGIVPVPESQLPVELPYDVEFAPDGKSPLAKSEAFVNTTCPHCGKPAKRETDTLDTFVCSSWYYLRYPDNKNTEAPFNPELINKMLPVDKYVGGPEHACMHLLYARFITKALRDMGYLNFDEPFTSLTHQGLILGPDGLKMSKSKGNTISPDDYIKEYGADVFRMYLMFGFAYTEGGAWSDDGIKSVNRFVERIERIIDTAREAISKGENNKTTMDKAEKELNYWRHNTIKSVTDDTDKLQFNTAIARMMEFINALSKYTQEKEMNLDFLKDVVSDYLRLLAPFAPHFSEEQWSLLGNSYSIFNEAWPKFDPKALVKDEVEIAIQVNGKIKNKIMVSSDLDEEGIKAAALADEKIIASTEGKTVVKVIVIKGRLVNIVVK.

The 'HIGH' region signature appears at 40–51; it reads SYPSGSQLHAGH. A 'KMSKS' region motif is present at residues 576 to 580; it reads KMSKS. An ATP-binding site is contributed by lysine 579.

This sequence belongs to the class-I aminoacyl-tRNA synthetase family.

Its subcellular location is the cytoplasm. It carries out the reaction tRNA(Leu) + L-leucine + ATP = L-leucyl-tRNA(Leu) + AMP + diphosphate. The polypeptide is Leucine--tRNA ligase (Clostridium perfringens (strain ATCC 13124 / DSM 756 / JCM 1290 / NCIMB 6125 / NCTC 8237 / Type A)).